The chain runs to 862 residues: Leucine--tRNA ligase (862 aa).

Residues 44–54 (PYPSGRIHMGH) carry the 'HIGH' region motif. Residues 622 to 626 (KMSKS) carry the 'KMSKS' region motif. Lys625 contacts ATP.

This sequence belongs to the class-I aminoacyl-tRNA synthetase family.

It localises to the cytoplasm. It catalyses the reaction tRNA(Leu) + L-leucine + ATP = L-leucyl-tRNA(Leu) + AMP + diphosphate. The chain is Leucine--tRNA ligase from Rhodospirillum rubrum (strain ATCC 11170 / ATH 1.1.1 / DSM 467 / LMG 4362 / NCIMB 8255 / S1).